The following is a 266-amino-acid chain: Ribonuclease HII (266 aa).

Positions 73–266 constitute an RNase H type-2 domain; sequence SPVAGVDEAG…NCGSRQKCEG (194 aa). A divalent metal cation-binding residues include Asp79, Glu80, and Asp173.

Belongs to the RNase HII family. The cofactor is Mn(2+). Mg(2+) is required as a cofactor.

The protein resides in the cytoplasm. It carries out the reaction Endonucleolytic cleavage to 5'-phosphomonoester.. Endonuclease that specifically degrades the RNA of RNA-DNA hybrids. This Pelotomaculum thermopropionicum (strain DSM 13744 / JCM 10971 / SI) protein is Ribonuclease HII.